The following is a 212-amino-acid chain: Probable nicotinate-nucleotide adenylyltransferase (212 aa).

It belongs to the NadD family.

It carries out the reaction nicotinate beta-D-ribonucleotide + ATP + H(+) = deamido-NAD(+) + diphosphate. The protein operates within cofactor biosynthesis; NAD(+) biosynthesis; deamido-NAD(+) from nicotinate D-ribonucleotide: step 1/1. In terms of biological role, catalyzes the reversible adenylation of nicotinate mononucleotide (NaMN) to nicotinic acid adenine dinucleotide (NaAD). This Shewanella sp. (strain MR-4) protein is Probable nicotinate-nucleotide adenylyltransferase.